Here is a 167-residue protein sequence, read N- to C-terminus: Phospholipase A2 (167 aa).

Residues W38, G40, and G42 each contribute to the Ca(2+) site. 5 disulfide bridges follow: C39-C61, C60-C99, C67-C92, C90-C127, and C132-C144. N-linked (GlcNAc...) asparagine glycosylation is present at N47. H64 is a catalytic residue. Residue D65 coordinates Ca(2+). Positions 136 to 140 (ARSAR) are excised as a propeptide.

This sequence belongs to the phospholipase A2 family. Group III subfamily. As to quaternary structure, heterodimer composed of a large subunit and a small subunit; disulfide-linked. The cofactor is Ca(2+). As to expression, expressed by the venom gland.

The protein localises to the secreted. It catalyses the reaction a 1,2-diacyl-sn-glycero-3-phosphocholine + H2O = a 1-acyl-sn-glycero-3-phosphocholine + a fatty acid + H(+). Phospholipase toxin, which catalyzes the calcium-dependent hydrolysis of the 2-acyl groups in 3-sn-phosphoglycerides. Inhibits both skeletal (RYR1) and cardiac (RYR2) ryanodine receptors (calcium release channels). Probably blocks ryanodine receptors by generating a lipid product. Shows hemolytic activity, but it is not know if it is direct or indirect. The protein is Phospholipase A2 of Hottentotta tamulus (Eastern Indian scorpion).